The primary structure comprises 218 residues: Glutathione S-transferase Mu 7 (218 aa).

Residues 2–88 enclose the GST N-terminal domain; the sequence is PMTLGYWDIR…YLGRKHNLCG (87 aa). Glutathione-binding positions include 7–8, 46–50, 59–60, and 72–73; these read YW, WLNEK, NL, and QS. One can recognise a GST C-terminal domain in the interval 90 to 208; that stretch reads TEEERIRVDI…KSSRFLPRPL (119 aa). Residue Y116 coordinates substrate.

The protein belongs to the GST superfamily. Mu family. As to quaternary structure, homodimer.

Its subcellular location is the cytoplasm. It catalyses the reaction RX + glutathione = an S-substituted glutathione + a halide anion + H(+). Its function is as follows. Conjugation of reduced glutathione to a wide number of exogenous and endogenous hydrophobic electrophiles. The sequence is that of Glutathione S-transferase Mu 7 from Rattus norvegicus (Rat).